A 263-amino-acid chain; its full sequence is Ribonuclease HII (263 aa).

Residues 39–257 enclose the RNase H type-2 domain; the sequence is AFFTGIDEAG…VKPAAAPHAA (219 aa). The a divalent metal cation site is built by D45, E46, and D157.

It belongs to the RNase HII family. Mn(2+) is required as a cofactor. Requires Mg(2+) as cofactor.

The protein localises to the cytoplasm. It carries out the reaction Endonucleolytic cleavage to 5'-phosphomonoester.. Its function is as follows. Endonuclease that specifically degrades the RNA of RNA-DNA hybrids. This is Ribonuclease HII from Oleidesulfovibrio alaskensis (strain ATCC BAA-1058 / DSM 17464 / G20) (Desulfovibrio alaskensis).